We begin with the raw amino-acid sequence, 710 residues long: PWWP domain-containing DNA repair factor 3A (710 aa).

A disordered region spans residues 106–160; it reads QESSAGTGRADRSLRGKPMEHVSSPCDSNSSSLPRGDVLGSSRPHRRRPCVQQSL. A compositionally biased stretch (basic and acidic residues) spans 114–125; sequence RADRSLRGKPME. The segment covering 128–137 has biased composition (low complexity); it reads SSPCDSNSSS. S161 bears the Phosphoserine mark. 2 disordered regions span residues 177-204 and 230-398; these read KKGLRKSENPRGPLVLPAGGGAQDESGS and NGSS…EEPP. Residues 288–297 are compositionally biased toward low complexity; the sequence is PSACSEPGEC. S374 and S375 each carry phosphoserine. A compositionally biased stretch (polar residues) spans 375–385; it reads SEESMGSNSMR. In terms of domain architecture, PWWP spans 411-472; it reads VGMLVWHKHK…KHFDCKEKQT (62 aa).

Belongs to the PWWP3A family. As to quaternary structure, interacts with TP53BP1 (via BRCT domain); the interaction is not dependent on its phosphorylation status. Binds nucleosomes. Interacts with trimethylated 'Lys-36' of histone H3 (H3K36me3) (in vitro).

Its subcellular location is the nucleus. In terms of biological role, involved in the DNA damage response pathway by contributing to the maintenance of chromatin architecture. Recruited to the vicinity of DNA breaks by TP53BP1 and plays an accessory role to facilitate damage-induced chromatin changes and promoting chromatin relaxation. Required for efficient DNA repair and cell survival following DNA damage. In Homo sapiens (Human), this protein is PWWP domain-containing DNA repair factor 3A.